A 685-amino-acid chain; its full sequence is Hemocyanin subunit X (685 aa).

An N-terminal signal peptide occupies residues 1–20 (MKYCTESLILILAVIGCISA). The Cu cation site is built by H210, H214, and H243. Residue N329 is glycosylated (N-linked (GlcNAc...) asparagine). H367, H371, and H407 together coordinate Cu cation. A disulfide bridge links C577 with C625.

Belongs to the tyrosinase family. Hemocyanin subfamily.

The protein resides in the secreted. It is found in the extracellular space. Hemocyanins are copper-containing oxygen carriers occurring freely dissolved in the hemolymph of many mollusks and arthropods. This chain is Hemocyanin subunit X (HCX), found in Scutigera coleoptrata (House centipede).